The following is a 380-amino-acid chain: Queuine tRNA-ribosyltransferase (380 aa).

Aspartate 96 acts as the Proton acceptor in catalysis. Residues 96 to 100 (DSGGF), aspartate 150, glutamine 193, and glycine 220 contribute to the substrate site. Residues 251–257 (GVGAPDS) form an RNA binding region. Aspartate 270 serves as the catalytic Nucleophile. Residues 275 to 279 (TRIAR) are RNA binding; important for wobble base 34 recognition. Zn(2+) is bound by residues cysteine 308, cysteine 310, cysteine 313, and histidine 339.

The protein belongs to the queuine tRNA-ribosyltransferase family. As to quaternary structure, homodimer. Within each dimer, one monomer is responsible for RNA recognition and catalysis, while the other monomer binds to the replacement base PreQ1. Zn(2+) serves as cofactor.

It carries out the reaction 7-aminomethyl-7-carbaguanine + guanosine(34) in tRNA = 7-aminomethyl-7-carbaguanosine(34) in tRNA + guanine. It participates in tRNA modification; tRNA-queuosine biosynthesis. In terms of biological role, catalyzes the base-exchange of a guanine (G) residue with the queuine precursor 7-aminomethyl-7-deazaguanine (PreQ1) at position 34 (anticodon wobble position) in tRNAs with GU(N) anticodons (tRNA-Asp, -Asn, -His and -Tyr). Catalysis occurs through a double-displacement mechanism. The nucleophile active site attacks the C1' of nucleotide 34 to detach the guanine base from the RNA, forming a covalent enzyme-RNA intermediate. The proton acceptor active site deprotonates the incoming PreQ1, allowing a nucleophilic attack on the C1' of the ribose to form the product. After dissociation, two additional enzymatic reactions on the tRNA convert PreQ1 to queuine (Q), resulting in the hypermodified nucleoside queuosine (7-(((4,5-cis-dihydroxy-2-cyclopenten-1-yl)amino)methyl)-7-deazaguanosine). This is Queuine tRNA-ribosyltransferase from Streptococcus suis (strain 98HAH33).